The primary structure comprises 363 residues: Peroxidase (363 aa).

A signal peptide spans M1–P20. Position 21 is a pyrrolidone carboxylic acid (Q21). Disulfide bonds link C31–C43, C42–C312, C62–C148, and C276–C341. H75 functions as the Proton acceptor in the catalytic mechanism. Ca(2+)-binding residues include D76, G94, D96, and S98. A glycan (N-linked (GlcNAc...) (high mannose) asparagine) is linked at N162. H203 contributes to the heme b binding site. Residues S204, D221, T223, V226, and D228 each coordinate Ca(2+). S358 carries an O-linked (Man...) serine glycan.

The protein belongs to the peroxidase family. Ligninase subfamily. Ca(2+) serves as cofactor. Heme b is required as a cofactor.

The protein resides in the secreted. It catalyses the reaction 2 a phenolic donor + H2O2 = 2 a phenolic radical donor + 2 H2O. The chain is Peroxidase (CIP1) from Coprinopsis cinerea (strain Okayama-7 / 130 / ATCC MYA-4618 / FGSC 9003) (Inky cap fungus).